The primary structure comprises 308 residues: Elongation factor Ts (308 aa).

Residues threonine 80–valine 83 are involved in Mg(2+) ion dislocation from EF-Tu.

The protein belongs to the EF-Ts family.

The protein resides in the cytoplasm. Associates with the EF-Tu.GDP complex and induces the exchange of GDP to GTP. It remains bound to the aminoacyl-tRNA.EF-Tu.GTP complex up to the GTP hydrolysis stage on the ribosome. The sequence is that of Elongation factor Ts from Verminephrobacter eiseniae (strain EF01-2).